Here is a 341-residue protein sequence, read N- to C-terminus: tRNA N6-adenosine threonylcarbamoyltransferase (341 aa).

Fe cation is bound by residues His115 and His119. Substrate-binding positions include 137-141, Asp170, Gly183, Asp187, and Asn276; that span reads IVSGG. Asp304 is a binding site for Fe cation.

Belongs to the KAE1 / TsaD family. Requires Fe(2+) as cofactor.

The protein localises to the cytoplasm. It carries out the reaction L-threonylcarbamoyladenylate + adenosine(37) in tRNA = N(6)-L-threonylcarbamoyladenosine(37) in tRNA + AMP + H(+). Required for the formation of a threonylcarbamoyl group on adenosine at position 37 (t(6)A37) in tRNAs that read codons beginning with adenine. Is involved in the transfer of the threonylcarbamoyl moiety of threonylcarbamoyl-AMP (TC-AMP) to the N6 group of A37, together with TsaE and TsaB. TsaD likely plays a direct catalytic role in this reaction. The chain is tRNA N6-adenosine threonylcarbamoyltransferase from Staphylococcus aureus (strain MRSA252).